Here is a 194-residue protein sequence, read N- to C-terminus: RNA polymerase II subunit A C-terminal domain phosphatase SSU72 like protein 6 (194 aa).

Belongs to the SSU72 phosphatase family.

The protein localises to the nucleus. The catalysed reaction is O-phospho-L-seryl-[protein] + H2O = L-seryl-[protein] + phosphate. It carries out the reaction O-phospho-L-threonyl-[protein] + H2O = L-threonyl-[protein] + phosphate. Protein phosphatase that catalyzes the dephosphorylation of the C-terminal domain of RNA polymerase II. Plays a role in RNA processing and termination. In Homo sapiens (Human), this protein is RNA polymerase II subunit A C-terminal domain phosphatase SSU72 like protein 6.